The following is a 1120-amino-acid chain: Isoleucine--tRNA ligase (1120 aa).

A 'HIGH' region motif is present at residues 64 to 74 (PFANGLPHYGH). The short motif at 647-651 (KLSKR) is the 'KMSKS' region element. Lys650 is a binding site for ATP.

It belongs to the class-I aminoacyl-tRNA synthetase family. IleS type 2 subfamily. In terms of assembly, monomer. The cofactor is Zn(2+).

The protein resides in the cytoplasm. It catalyses the reaction tRNA(Ile) + L-isoleucine + ATP = L-isoleucyl-tRNA(Ile) + AMP + diphosphate. Catalyzes the attachment of isoleucine to tRNA(Ile). As IleRS can inadvertently accommodate and process structurally similar amino acids such as valine, to avoid such errors it has two additional distinct tRNA(Ile)-dependent editing activities. One activity is designated as 'pretransfer' editing and involves the hydrolysis of activated Val-AMP. The other activity is designated 'posttransfer' editing and involves deacylation of mischarged Val-tRNA(Ile). The polypeptide is Isoleucine--tRNA ligase (Ehrlichia canis (strain Jake)).